Here is a 285-residue protein sequence, read N- to C-terminus: Protein HtrL (285 aa).

The sequence is that of Protein HtrL from Escherichia coli (strain K12).